The chain runs to 771 residues: Probable cation-transporting ATPase G (771 aa).

The region spanning 19-86 is the HMA domain; that stretch reads GRMRVQATGF…AIIDAETVPA (68 aa). The helical transmembrane segment at 72-92 threads the bilayer; the sequence is AAILSAIIDAETVPAAAVPAY. The disordered stretch occupies residues 122–143; that stretch reads DVAAQPSGETSDACCDGEDNED. The next 5 helical transmembrane spans lie at 163 to 183, 209 to 229, 330 to 350, 387 to 407, and 411 to 431; these read VLLT…VVLG, VGVG…GELG, VFAG…ATAA, MIAA…LVWI, and LVVL…VTVV. Asp-462 (4-aspartylphosphate intermediate) is an active-site residue. Residues Asp-651 and Asp-655 each coordinate Mg(2+). A run of 2 helical transmembrane segments spans residues 657–677 and 716–736; these read PALA…DVAI and IITV…AVVL.

This sequence belongs to the cation transport ATPase (P-type) (TC 3.A.3) family. Type IB subfamily.

Its subcellular location is the cell membrane. The enzyme catalyses ATP + H2O = ADP + phosphate + H(+). The chain is Probable cation-transporting ATPase G (ctpG) from Mycobacterium bovis (strain ATCC BAA-935 / AF2122/97).